The primary structure comprises 231 residues: MTITIALPSKGRMKDDASAIFERAGMTITAVGNDRSYRGRVEGWDDVEVAFLSASEISRELGNGTVDFGVTGEDLMREGFAEVDKRVEFCARLGFGHADVVVAVPEIWLDVDTMADLGDVAADFRARHSRRLAIATKYWRLTQQFFSSQHGIQLYRIVESLGATEGAPAAGSADIIVDITSTGSTLRANHLKVLQDGVILHSQACLVRARKESHADEPVVQAIIDAVRAAL.

This sequence belongs to the ATP phosphoribosyltransferase family. Short subfamily. In terms of assembly, heteromultimer composed of HisG and HisZ subunits.

The protein localises to the cytoplasm. The catalysed reaction is 1-(5-phospho-beta-D-ribosyl)-ATP + diphosphate = 5-phospho-alpha-D-ribose 1-diphosphate + ATP. The protein operates within amino-acid biosynthesis; L-histidine biosynthesis; L-histidine from 5-phospho-alpha-D-ribose 1-diphosphate: step 1/9. Catalyzes the condensation of ATP and 5-phosphoribose 1-diphosphate to form N'-(5'-phosphoribosyl)-ATP (PR-ATP). Has a crucial role in the pathway because the rate of histidine biosynthesis seems to be controlled primarily by regulation of HisG enzymatic activity. The protein is ATP phosphoribosyltransferase (hisG) of Rhizobium etli (strain ATCC 51251 / DSM 11541 / JCM 21823 / NBRC 15573 / CFN 42).